Here is a 953-residue protein sequence, read N- to C-terminus: Zinc finger protein 507 (953 aa).

Ser-95 is modified (phosphoserine). 3 consecutive C2H2-type zinc fingers follow at residues 125 to 147 (YQCS…IKQH), 155 to 185 (LMCS…ANIH), and 248 to 270 (YRCL…AWKH). Ser-427 carries the post-translational modification Phosphoserine. The interval 470-489 (KGLATDENAPPGRRRTNSES) is disordered. 5 consecutive C2H2-type zinc fingers follow at residues 641–663 (YRCR…LRVH), 669–691 (YQCP…MIHH), 697–720 (YQCK…REQH), 758–780 (YRCD…RRIH), and 786–808 (YRCS…MWKH). A disordered region spans residues 831 to 891 (GRVLGKTPGK…KLSPTSNTSY (61 aa)). Positions 854-891 (TGSSENAVSSSELMSQTPSEVLGTNENEKLSPTSNTSY) are enriched in polar residues. The segment at 911-933 (FCCCICGFESTSKENLLDHMKEH) adopts a C2H2-type 9 zinc-finger fold.

Belongs to the krueppel C2H2-type zinc-finger protein family.

The protein resides in the nucleus. May be involved in transcriptional regulation. This is Zinc finger protein 507 (ZNF507) from Pongo abelii (Sumatran orangutan).